A 306-amino-acid chain; its full sequence is Triplex capsid protein 2 (306 aa).

The protein belongs to the herpesviridae TRX2 protein family. In terms of assembly, interacts with TRX1 and major capisd protein/MCP.

It is found in the virion. Its subcellular location is the host nucleus. Structural component of the T=16 icosahedral capsid. The capsid is composed of pentamers and hexamers of major capsid protein/MCP, which are linked together by heterotrimers called triplexes. These triplexes are formed by a single molecule of triplex protein 1/TRX1 and two copies of triplex protein 2/TRX2. Additionally, TRX1 is required for efficient transport of TRX2 to the nucleus, which is the site of capsid assembly. The protein is Triplex capsid protein 2 of Human cytomegalovirus (strain AD169) (HHV-5).